The following is a 434-amino-acid chain: Nicotinate phosphoribosyltransferase (434 aa).

The residue at position 242 (His-242) is a Phosphohistidine; by autocatalysis.

This sequence belongs to the NAPRTase family. Post-translationally, transiently phosphorylated on a His residue during the reaction cycle. Phosphorylation strongly increases the affinity for substrates and increases the rate of nicotinate D-ribonucleotide production. Dephosphorylation regenerates the low-affinity form of the enzyme, leading to product release.

It carries out the reaction nicotinate + 5-phospho-alpha-D-ribose 1-diphosphate + ATP + H2O = nicotinate beta-D-ribonucleotide + ADP + phosphate + diphosphate. Its pathway is cofactor biosynthesis; NAD(+) biosynthesis; nicotinate D-ribonucleotide from nicotinate: step 1/1. Its function is as follows. Catalyzes the synthesis of beta-nicotinate D-ribonucleotide from nicotinate and 5-phospho-D-ribose 1-phosphate at the expense of ATP. The polypeptide is Nicotinate phosphoribosyltransferase (Mesorhizobium japonicum (strain LMG 29417 / CECT 9101 / MAFF 303099) (Mesorhizobium loti (strain MAFF 303099))).